The chain runs to 405 residues: Tryptophan synthase beta chain (405 aa).

An N6-(pyridoxal phosphate)lysine modification is found at Lys98.

Belongs to the TrpB family. Tetramer of two alpha and two beta chains. Pyridoxal 5'-phosphate is required as a cofactor.

It carries out the reaction (1S,2R)-1-C-(indol-3-yl)glycerol 3-phosphate + L-serine = D-glyceraldehyde 3-phosphate + L-tryptophan + H2O. The protein operates within amino-acid biosynthesis; L-tryptophan biosynthesis; L-tryptophan from chorismate: step 5/5. Its function is as follows. The beta subunit is responsible for the synthesis of L-tryptophan from indole and L-serine. The chain is Tryptophan synthase beta chain from Xylella fastidiosa (strain M23).